We begin with the raw amino-acid sequence, 618 residues long: Proline--tRNA ligase (618 aa).

This sequence belongs to the class-II aminoacyl-tRNA synthetase family. ProS type 1 subfamily. As to quaternary structure, homodimer.

The protein resides in the cytoplasm. The enzyme catalyses tRNA(Pro) + L-proline + ATP = L-prolyl-tRNA(Pro) + AMP + diphosphate. Catalyzes the attachment of proline to tRNA(Pro) in a two-step reaction: proline is first activated by ATP to form Pro-AMP and then transferred to the acceptor end of tRNA(Pro). As ProRS can inadvertently accommodate and process non-cognate amino acids such as alanine and cysteine, to avoid such errors it has two additional distinct editing activities against alanine. One activity is designated as 'pretransfer' editing and involves the tRNA(Pro)-independent hydrolysis of activated Ala-AMP. The other activity is designated 'posttransfer' editing and involves deacylation of mischarged Ala-tRNA(Pro). The misacylated Cys-tRNA(Pro) is not edited by ProRS. This chain is Proline--tRNA ligase, found in Streptococcus pyogenes serotype M4 (strain MGAS10750).